The following is a 182-amino-acid chain: NADH-quinone oxidoreductase subunit B (182 aa).

Cys61, Cys62, Cys126, and Cys156 together coordinate [4Fe-4S] cluster.

Belongs to the complex I 20 kDa subunit family. In terms of assembly, NDH-1 is composed of 14 different subunits. Subunits NuoB, C, D, E, F, and G constitute the peripheral sector of the complex. [4Fe-4S] cluster serves as cofactor.

It localises to the cell inner membrane. The enzyme catalyses a quinone + NADH + 5 H(+)(in) = a quinol + NAD(+) + 4 H(+)(out). Functionally, NDH-1 shuttles electrons from NADH, via FMN and iron-sulfur (Fe-S) centers, to quinones in the respiratory chain. The immediate electron acceptor for the enzyme in this species is believed to be ubiquinone. Couples the redox reaction to proton translocation (for every two electrons transferred, four hydrogen ions are translocated across the cytoplasmic membrane), and thus conserves the redox energy in a proton gradient. This is NADH-quinone oxidoreductase subunit B from Xanthomonas oryzae pv. oryzae (strain PXO99A).